The primary structure comprises 94 residues: DNA-binding protein HU (94 aa).

The protein belongs to the bacterial histone-like protein family. As to quaternary structure, homodimer.

Its function is as follows. Histone-like DNA-binding protein which is capable of wrapping DNA to stabilize it, and thus to prevent its denaturation under extreme environmental conditions. It is essential for heterocyst differentiation. The polypeptide is DNA-binding protein HU (hup) (Nostoc sp. (strain PCC 7120 / SAG 25.82 / UTEX 2576)).